We begin with the raw amino-acid sequence, 36 residues long: Glycine-rich protein GWK (36 aa).

The disordered stretch occupies residues 1–36 (YKRGGGGWGGGGGWKGGGGGGGGWKGGGGGGKGGGG).

In terms of biological role, possesses antifungal activity against a number of phytopathogenic fungi, including H.sativum and F.culmorum. The sequence is that of Glycine-rich protein GWK from Cucumis melo (Muskmelon).